The following is an 86-amino-acid chain: Large ribosomal subunit protein bL31B (86 aa).

This sequence belongs to the bacterial ribosomal protein bL31 family. Type B subfamily. In terms of assembly, part of the 50S ribosomal subunit.

The sequence is that of Large ribosomal subunit protein bL31B from Cupriavidus necator (strain ATCC 17699 / DSM 428 / KCTC 22496 / NCIMB 10442 / H16 / Stanier 337) (Ralstonia eutropha).